Here is a 139-residue protein sequence, read N- to C-terminus: Gastrula zinc finger protein XlCGF29.1 (139 aa).

5 C2H2-type zinc fingers span residues 6–28 (FTCTECEESFSLKSRLIAHLLIH), 34–56 (FDSTKCGKGFRRNQYLKEHLSTH), 62–84 (FVCTVCGKTYKYKHGLNTHLHSH), 90–112 (FPCSECRKIFSSKASLDIHLRHH), and 117–139 (FPCTECDKTFKQKKNLKRHQMIH).

Belongs to the krueppel C2H2-type zinc-finger protein family.

It localises to the nucleus. In terms of biological role, may be involved in transcriptional regulation. The polypeptide is Gastrula zinc finger protein XlCGF29.1 (Xenopus laevis (African clawed frog)).